The chain runs to 715 residues: Polyribonucleotide nucleotidyltransferase (715 aa).

D487 and D493 together coordinate Mg(2+). The 60-residue stretch at 554–613 folds into the KH domain; the sequence is PRLYTFKINPEKIRDVIGKGGAVIRALTEETGTTIDIQDDGTITIAATSGEAAAAARSRI. The S1 motif domain occupies 623–691; sequence GKIYEGTVLK…DRGRVKLSMK (69 aa).

Belongs to the polyribonucleotide nucleotidyltransferase family. The cofactor is Mg(2+).

The protein localises to the cytoplasm. The enzyme catalyses RNA(n+1) + phosphate = RNA(n) + a ribonucleoside 5'-diphosphate. Its function is as follows. Involved in mRNA degradation. Catalyzes the phosphorolysis of single-stranded polyribonucleotides processively in the 3'- to 5'-direction. The chain is Polyribonucleotide nucleotidyltransferase from Dechloromonas aromatica (strain RCB).